Reading from the N-terminus, the 107-residue chain is Putative double-stranded DNA mimic protein HI_1450 (107 aa).

It belongs to the putative dsDNA mimic protein family. Monomer in solution. Interacts with the DNA-binding protein HU.

Functionally, may act as a double-stranded DNA (dsDNA) mimic. Probably regulates the activity of the DNA-binding protein HU. In Haemophilus influenzae (strain ATCC 51907 / DSM 11121 / KW20 / Rd), this protein is Putative double-stranded DNA mimic protein HI_1450.